The chain runs to 159 residues: Small ribosomal subunit protein uS9 (159 aa).

Belongs to the universal ribosomal protein uS9 family.

The polypeptide is Small ribosomal subunit protein uS9 (Rickettsia peacockii (strain Rustic)).